The sequence spans 426 residues: Histidine--tRNA ligase (426 aa).

This sequence belongs to the class-II aminoacyl-tRNA synthetase family. In terms of assembly, homodimer.

The protein localises to the cytoplasm. It carries out the reaction tRNA(His) + L-histidine + ATP = L-histidyl-tRNA(His) + AMP + diphosphate + H(+). This Streptococcus pyogenes serotype M28 (strain MGAS6180) protein is Histidine--tRNA ligase.